Consider the following 126-residue polypeptide: MSISPPDDLVASVTFDDRGLVPAIAQQEGTGEVLMMAWMNAESLRATLETGWATYWSRSRGELWRKGETSGHLQRVRAVHADCDGDTLLLTVDQTGPACHTGTRTCFTGRELVMPPAAVDPEEAAR.

Aspartate 82 lines the Mg(2+) pocket. A Zn(2+)-binding site is contributed by cysteine 83. Residues aspartate 84 and aspartate 86 each coordinate Mg(2+). The Zn(2+) site is built by cysteine 99 and cysteine 106.

Belongs to the PRA-CH family. As to quaternary structure, homodimer. Mg(2+) serves as cofactor. Zn(2+) is required as a cofactor.

The protein resides in the cytoplasm. The enzyme catalyses 1-(5-phospho-beta-D-ribosyl)-5'-AMP + H2O = 1-(5-phospho-beta-D-ribosyl)-5-[(5-phospho-beta-D-ribosylamino)methylideneamino]imidazole-4-carboxamide. Its pathway is amino-acid biosynthesis; L-histidine biosynthesis; L-histidine from 5-phospho-alpha-D-ribose 1-diphosphate: step 3/9. Its function is as follows. Catalyzes the hydrolysis of the adenine ring of phosphoribosyl-AMP. The chain is Phosphoribosyl-AMP cyclohydrolase from Micrococcus luteus (strain ATCC 4698 / DSM 20030 / JCM 1464 / CCM 169 / CCUG 5858 / IAM 1056 / NBRC 3333 / NCIMB 9278 / NCTC 2665 / VKM Ac-2230) (Micrococcus lysodeikticus).